We begin with the raw amino-acid sequence, 200 residues long: Imidazoleglycerol-phosphate dehydratase (200 aa).

Belongs to the imidazoleglycerol-phosphate dehydratase family.

The protein localises to the cytoplasm. It catalyses the reaction D-erythro-1-(imidazol-4-yl)glycerol 3-phosphate = 3-(imidazol-4-yl)-2-oxopropyl phosphate + H2O. It participates in amino-acid biosynthesis; L-histidine biosynthesis; L-histidine from 5-phospho-alpha-D-ribose 1-diphosphate: step 6/9. The sequence is that of Imidazoleglycerol-phosphate dehydratase from Leifsonia xyli subsp. xyli (strain CTCB07).